A 185-amino-acid polypeptide reads, in one-letter code: Dual specificity protein phosphatase 3 (185 aa).

The Tyrosine-protein phosphatase domain occupies 28-179 (QPCNEVTPRI…LCQLNDRLAK (152 aa)). The Phosphocysteine intermediate role is filled by Cys124.

It belongs to the protein-tyrosine phosphatase family. Non-receptor class dual specificity subfamily. Microtubule inner protein component of sperm flagellar doublet microtubules. Interacts with VRK3; this interaction activates DUSP3 phosphatase activity.

It is found in the nucleus. Its subcellular location is the cytoplasm. The protein resides in the cytoskeleton. The protein localises to the flagellum axoneme. It carries out the reaction O-phospho-L-tyrosyl-[protein] + H2O = L-tyrosyl-[protein] + phosphate. The catalysed reaction is O-phospho-L-seryl-[protein] + H2O = L-seryl-[protein] + phosphate. It catalyses the reaction O-phospho-L-threonyl-[protein] + H2O = L-threonyl-[protein] + phosphate. Functionally, shows activity both for tyrosine-protein phosphate and serine-protein phosphate, but displays a strong preference toward phosphotyrosines. Specifically dephosphorylates and inactivates ERK1 and ERK2. In Homo sapiens (Human), this protein is Dual specificity protein phosphatase 3 (DUSP3).